The primary structure comprises 201 residues: MSVKARILVLYYSMYGHIETMARAVAEGASKVDGAEVVVKRVPETMPPQLFEKAGGKTQTAPVATPQELADYDAIIFGTPTRFGNMSGQMRTFLDQTGGLWASGALYGKLASVFSSTGTGGGQEQTITSTWTTLAHHGMVIVPIGYAAQELFDVSQVRGGTPYGATTIAGGDGSRQPSQEELSIARYQGEYVAGLAVKLNG.

In terms of domain architecture, Flavodoxin-like spans 7-192; the sequence is ILVLYYSMYG…SIARYQGEYV (186 aa). Residues 13-18 and 81-83 contribute to the FMN site; these read SMYGHI and TRF. Y15 serves as a coordination point for NAD(+). Residue W101 participates in substrate binding. FMN-binding positions include 116 to 121 and H136; that span reads STGTGG.

It belongs to the WrbA family. It depends on FMN as a cofactor.

The catalysed reaction is a quinone + NADH + H(+) = a quinol + NAD(+). It catalyses the reaction a quinone + NADPH + H(+) = a quinol + NADP(+). In Shigella sonnei (strain Ss046), this protein is NAD(P)H dehydrogenase (quinone).